Reading from the N-terminus, the 417-residue chain is MAEVRNYTFNFGPQHPAAHGVLRLIVEVDGEVIQRIDPHIGLLHRATEKLAESKPYNQTIGYMDRLDYVSMMANEHGYVLAIEKLLGIEPPIRAKYIRTMFDEITRILNHLLWLGAHALDVGAMTVFLYCFREREDLMDCYEAVSGARMHATYYRPGGVYRDLPDSMPKYKPSRWHNEKAVKKMNEAREGSLLDFIWDFTARFPNLIDEYESLLTDNRIWKQRTVGIGVVSAERALQLGFTGPMLRASGVEWDLRKKQPYAAYDRVDFDIPIGREGDCYDRYLVRIEEMRQSNRIIRQCVEWLRKNPGPVMIDDYKIVPPQREVMKRDMEALIHHFKLFTEGYIVPEGEAYAAVEQPKGEFGVYIVSDGANKPYRVKVRAASYPHLAAMNEMCRGHMIADLVAIISSIDIVFGEIDR.

Belongs to the complex I 49 kDa subunit family. As to quaternary structure, NDH-1 is composed of 14 different subunits. Subunits NuoB, C, D, E, F, and G constitute the peripheral sector of the complex.

The protein resides in the cell inner membrane. The enzyme catalyses a quinone + NADH + 5 H(+)(in) = a quinol + NAD(+) + 4 H(+)(out). Functionally, NDH-1 shuttles electrons from NADH, via FMN and iron-sulfur (Fe-S) centers, to quinones in the respiratory chain. The immediate electron acceptor for the enzyme in this species is believed to be ubiquinone. Couples the redox reaction to proton translocation (for every two electrons transferred, four hydrogen ions are translocated across the cytoplasmic membrane), and thus conserves the redox energy in a proton gradient. The polypeptide is NADH-quinone oxidoreductase subunit D (Coxiella burnetii (strain CbuG_Q212) (Coxiella burnetii (strain Q212))).